Consider the following 308-residue polypeptide: Ribosomal protein L11 methyltransferase (308 aa).

S-adenosyl-L-methionine-binding residues include threonine 148, glycine 169, aspartate 191, and asparagine 239.

This sequence belongs to the methyltransferase superfamily. PrmA family.

Its subcellular location is the cytoplasm. It catalyses the reaction L-lysyl-[protein] + 3 S-adenosyl-L-methionine = N(6),N(6),N(6)-trimethyl-L-lysyl-[protein] + 3 S-adenosyl-L-homocysteine + 3 H(+). Methylates ribosomal protein L11. This is Ribosomal protein L11 methyltransferase from Psychrobacter arcticus (strain DSM 17307 / VKM B-2377 / 273-4).